Consider the following 77-residue polypeptide: U8-lycotoxin-Ls1u (77 aa).

Positions 1–20 are cleaved as a signal peptide; the sequence is MKLIIFTGLVLFAIVSLIEA. A propeptide spanning residues 21 to 26 is cleaved from the precursor; it reads QAENEK.

It belongs to the neurotoxin 19 (CSTX) family. 08 (U8-Lctx) subfamily. Post-translationally, contains 4 disulfide bonds. In terms of tissue distribution, expressed by the venom gland.

The protein resides in the secreted. The sequence is that of U8-lycotoxin-Ls1u from Lycosa singoriensis (Wolf spider).